The chain runs to 147 residues: Bis(5'-nucleosyl)-tetraphosphatase [asymmetrical] (147 aa).

At Ala2 the chain carries N-acetylalanine. Positions 2–139 constitute a Nudix hydrolase domain; it reads ALRACGLIIF…EMKAALQEGH (138 aa). The Nudix box signature appears at 43 to 64; the sequence is GHVEPGESDLETALRETQEEAG.

This sequence belongs to the Nudix hydrolase family. Requires a divalent metal cation as cofactor.

It catalyses the reaction P(1),P(4)-bis(5'-guanosyl) tetraphosphate + H2O = GMP + GTP + 2 H(+). The enzyme catalyses a 5'-end CoA-ribonucleoside in mRNA + H2O = a 5'-end phospho-adenosine-phospho-ribonucleoside in mRNA + (R)-4'-phosphopantetheine + 2 H(+). The catalysed reaction is a 5'-end FAD-phospho-ribonucleoside in mRNA + H2O = a 5'-end phospho-adenosine-phospho-ribonucleoside in mRNA + FMN + 2 H(+). Catalyzes the asymmetric hydrolysis of diadenosine 5',5'''-P1,P4-tetraphosphate (Ap4A) to yield AMP and ATP. Exhibits decapping activity towards FAD-capped RNAs and dpCoA-capped RNAs in vitro. The protein is Bis(5'-nucleosyl)-tetraphosphatase [asymmetrical] (NUDT2) of Bos taurus (Bovine).